A 383-amino-acid chain; its full sequence is Ovalbumin (383 aa).

Position 2 is an N-acetylglycine (Gly2). A signal peptide (not cleaved) is located at residues 22 to 48; that stretch reads HHANDNMLYSPFAILSTLAMVFLGAKD. Ser69 carries the post-translational modification Phosphoserine. Cys74 and Cys121 are oxidised to a cystine. Asn293 and Asn312 each carry an N-linked (GlcNAc...) asparagine glycan. Ser345 is subject to Phosphoserine.

It belongs to the serpin family. Ov-serpin subfamily. Post-translationally, the signal sequence is not cleaved. The functional signal for membrane translocation of ovalbumin becomes accessible when the nascent chain is 50 to 60 residues long. The hydrophobic sequence which lies between residues 27 and 43 folds back on the preceding residues to form an amphipathic hairpin structure which is the signal element recognized by the membrane. Major protein of egg white.

The protein localises to the secreted. Its function is as follows. Storage protein of egg white. Lack protease inhibitory activity. The polypeptide is Ovalbumin (SERPINB14) (Coturnix japonica (Japanese quail)).